Here is a 205-residue protein sequence, read N- to C-terminus: N-(5'-phosphoribosyl)anthranilate isomerase (205 aa).

Belongs to the TrpF family.

It carries out the reaction N-(5-phospho-beta-D-ribosyl)anthranilate = 1-(2-carboxyphenylamino)-1-deoxy-D-ribulose 5-phosphate. It functions in the pathway amino-acid biosynthesis; L-tryptophan biosynthesis; L-tryptophan from chorismate: step 3/5. This is N-(5'-phosphoribosyl)anthranilate isomerase from Phocaeicola vulgatus (strain ATCC 8482 / DSM 1447 / JCM 5826 / CCUG 4940 / NBRC 14291 / NCTC 11154) (Bacteroides vulgatus).